Reading from the N-terminus, the 438-residue chain is V-type ATP synthase beta chain (438 aa).

This sequence belongs to the ATPase alpha/beta chains family.

Its function is as follows. Produces ATP from ADP in the presence of a proton gradient across the membrane. The V-type beta chain is a regulatory subunit. This Chlamydia trachomatis serovar D (strain ATCC VR-885 / DSM 19411 / UW-3/Cx) protein is V-type ATP synthase beta chain (atpB).